The sequence spans 147 residues: Protein LOL1 (147 aa).

The disordered stretch occupies residues 1–38 (MVASRAPRSESPWLKKPMHGVSGSTAMASTPWSSMPPS). Polar residues predominate over residues 22–38 (SGSTAMASTPWSSMPPS). A putative zinc finger region spans residues 47–77 (QLVCSGCRNLLMYPAGATSICCAVCGTVTAV).

It is found in the nucleus. Functionally, putative zinc finger that may be involved in programmed cell death and defense response. The polypeptide is Protein LOL1 (LOL1) (Oryza sativa subsp. japonica (Rice)).